Consider the following 77-residue polypeptide: U8-lycotoxin-Ls1f (77 aa).

The N-terminal stretch at 1-20 (MKLIIFTGLVLFAIVSLIEV) is a signal peptide. A propeptide spanning residues 21-26 (QADNER) is cleaved from the precursor.

Belongs to the neurotoxin 19 (CSTX) family. 08 (U8-Lctx) subfamily. In terms of processing, contains 4 disulfide bonds. Expressed by the venom gland.

Its subcellular location is the secreted. The chain is U8-lycotoxin-Ls1f from Lycosa singoriensis (Wolf spider).